We begin with the raw amino-acid sequence, 71 residues long: Large ribosomal subunit protein bL31 (71 aa).

The Zn(2+) site is built by Cys-16, Cys-18, Cys-37, and Cys-40.

Belongs to the bacterial ribosomal protein bL31 family. Type A subfamily. As to quaternary structure, part of the 50S ribosomal subunit. Zn(2+) is required as a cofactor.

Its function is as follows. Binds the 23S rRNA. The sequence is that of Large ribosomal subunit protein bL31 from Pseudomonas entomophila (strain L48).